A 436-amino-acid chain; its full sequence is MEMLRRNFFRLLMVLVAGCGLIASPANALVEININKGNVEPLPIAITDFLQGELAQKISGVIAADLKRSGLFAPIDKGAFIEKISNPDATPRFEDWKVINAQALVIGRVTQEGDGRLKAEFRLWDTFAGQQMLGQQFYTQPENWRRVAHIIADAIYERITGEKGYFDTRIVYVAESGPKNARKRQLAIMDQDGANSRALTNSNDIVLTPRFSPNRQEITYMSFENQQPRVYLLQLETGQREVVGNFPGMTFAPRFSPDGQRVIMSLQQEGNANIYTMDLRSRTTTRLTNTAAIDTSPSYSPDGSRIVFESDRGGKQQLYVMGADGSGQTRISFGDGSYSTPVWSPRGDLIAFTKQSGGKFSIGVMKPDGSGERILTTGFHNEGPTWAPNGRVLMFFRQNAGAGGPQLYSIDLTGYNEQLVQTQGFASDPAWSPLME.

The signal sequence occupies residues 1-28 (MEMLRRNFFRLLMVLVAGCGLIASPANA).

It belongs to the TolB family. As to quaternary structure, the Tol-Pal system is composed of five core proteins: the inner membrane proteins TolA, TolQ and TolR, the periplasmic protein TolB and the outer membrane protein Pal. They form a network linking the inner and outer membranes and the peptidoglycan layer.

The protein localises to the periplasm. Functionally, part of the Tol-Pal system, which plays a role in outer membrane invagination during cell division and is important for maintaining outer membrane integrity. In Rhizobium meliloti (strain 1021) (Ensifer meliloti), this protein is Tol-Pal system protein TolB.